Here is a 542-residue protein sequence, read N- to C-terminus: Probable E3 ubiquitin-protein ligase ARI11 (542 aa).

The disordered stretch occupies residues 1 to 25 (MSSSDRDIIDIESGEEDLYSDGGND). Positions 10 to 19 (DIESGEEDLY) are enriched in acidic residues. Residues 135–342 (VDIQCGICFE…SDHKACNAFK (208 aa)) form a TRIAD supradomain region. Cys139, Cys142, Cys156, His158, Cys161, Cys164, Cys184, Cys189, Cys228, Cys233, Cys251, Cys253, Cys258, Cys261, His266, Cys271, Cys298, and Cys301 together coordinate Zn(2+). Residues 139–189 (CGICFESYTRKEIARVSCGHPYCKTCWTGYITTKIEDGPGCLRVKCPEPSC) form an RING-type 1 zinc finger. An IBR-type zinc finger spans residues 208 to 271 (DKYYRYFLRS…CEDAHSPVDC (64 aa)). An RING-type 2; atypical zinc finger spans residues 298–328 (CPKCKRPIEKNTGCNHMSCSAPCRHYFCWAC). Cys311 is a catalytic residue. Cys316, Cys320, Cys325, Cys328, His335, and Cys338 together coordinate Zn(2+).

This sequence belongs to the RBR family. Ariadne subfamily. Zn(2+) serves as cofactor.

The enzyme catalyses [E2 ubiquitin-conjugating enzyme]-S-ubiquitinyl-L-cysteine + [acceptor protein]-L-lysine = [E2 ubiquitin-conjugating enzyme]-L-cysteine + [acceptor protein]-N(6)-ubiquitinyl-L-lysine.. Its pathway is protein modification; protein ubiquitination. Might act as an E3 ubiquitin-protein ligase, or as part of E3 complex, which accepts ubiquitin from specific E2 ubiquitin-conjugating enzymes and then transfers it to substrates. The chain is Probable E3 ubiquitin-protein ligase ARI11 (ARI11) from Arabidopsis thaliana (Mouse-ear cress).